The primary structure comprises 241 residues: Adapter protein MecA (241 aa).

The segment at 77 to 102 (KNTDEDDVADESQGDASVDSEHPDQV) is disordered. A compositionally biased stretch (acidic residues) spans 80-89 (DEDDVADESQ).

This sequence belongs to the MecA family. Homodimer.

In terms of biological role, enables the recognition and targeting of unfolded and aggregated proteins to the ClpC protease or to other proteins involved in proteolysis. The sequence is that of Adapter protein MecA from Levilactobacillus brevis (strain ATCC 367 / BCRC 12310 / CIP 105137 / JCM 1170 / LMG 11437 / NCIMB 947 / NCTC 947) (Lactobacillus brevis).